Reading from the N-terminus, the 117-residue chain is UPF0122 protein TTE1463 (117 aa).

This sequence belongs to the UPF0122 family.

Its function is as follows. Might take part in the signal recognition particle (SRP) pathway. This is inferred from the conservation of its genetic proximity to ftsY/ffh. May be a regulatory protein. This chain is UPF0122 protein TTE1463, found in Caldanaerobacter subterraneus subsp. tengcongensis (strain DSM 15242 / JCM 11007 / NBRC 100824 / MB4) (Thermoanaerobacter tengcongensis).